We begin with the raw amino-acid sequence, 89 residues long: Small ribosomal subunit protein uS19 (89 aa).

It belongs to the universal ribosomal protein uS19 family.

In terms of biological role, protein S19 forms a complex with S13 that binds strongly to the 16S ribosomal RNA. The protein is Small ribosomal subunit protein uS19 of Xylella fastidiosa (strain M12).